We begin with the raw amino-acid sequence, 791 residues long: Diacylglycerol kinase gamma (791 aa).

Disordered stretches follow at residues 82 to 103 and 117 to 154; these read KPRH…ANSA and DEAC…SSSS. Residues 83–92 show a composition bias toward basic and acidic residues; it reads PRHETSDHPT. Over residues 94–103 the composition is skewed to polar residues; it reads GASNSEANSA. EF-hand domains follow at residues 175–210 and 220–255; these read RPQD…MLHI and ELRP…TIPL. Ca(2+)-binding residues include D188, D190, N192, E199, D233, D235, D237, and E244. 2 consecutive Phorbol-ester/DAG-type zinc fingers follow at residues 271–321 and 336–385; these read RHAW…IPGC and QHAW…LCDG. In terms of domain architecture, DAGKc spans 430 to 564; the sequence is PGTHPLLVLV…LDRWHLEVIP (135 aa). The segment at 768 to 791 is disordered; the sequence is APMMMGPPQKSSFFSLRRKSRSKD.

This sequence belongs to the eukaryotic diacylglycerol kinase family. As to expression, predominantly expressed in retina and in a much lesser extent in the brain. Other tissues contain extremely low levels of DGK-gamma.

Its subcellular location is the membrane. It localises to the cytoplasm. The protein localises to the cytosol. The protein resides in the cytoskeleton. It carries out the reaction a 1,2-diacyl-sn-glycerol + ATP = a 1,2-diacyl-sn-glycero-3-phosphate + ADP + H(+). The catalysed reaction is 1,2-didecanoyl-sn-glycerol + ATP = 1,2-didecanoyl-sn-glycero-3-phosphate + ADP + H(+). The enzyme catalyses 1-octadecanoyl-2-(5Z,8Z,11Z,14Z-eicosatetraenoyl)-sn-glycerol + ATP = 1-octadecanoyl-2-(5Z,8Z,11Z,14Z-eicosatetraenoyl)-sn-glycero-3-phosphate + ADP + H(+). It catalyses the reaction 1,2-di-(9Z-octadecenoyl)-sn-glycerol + ATP = 1,2-di-(9Z-octadecenoyl)-sn-glycero-3-phosphate + ADP + H(+). It carries out the reaction 1-octadecanoyl-2-(9Z,12Z)-octadecadienoyl-sn-glycerol + ATP = 1-octadecanoyl-2-(9Z,12Z-octadecadienoyl)-sn-glycero-3-phosphate + ADP + H(+). Its pathway is lipid metabolism; glycerolipid metabolism. With respect to regulation, the activity is calcium-dependent. Requires phosphatidylserine for maximal activity. Diacylglycerol kinase that converts diacylglycerol/DAG into phosphatidic acid/phosphatidate/PA and regulates the respective levels of these two bioactive lipids. Thereby, acts as a central switch between the signaling pathways activated by these second messengers with different cellular targets and opposite effects in numerous biological processes. Has no apparent specificity with regard to the acyl compositions of diacylglycerol. Specifically expressed in the cerebellum where it controls the level of diacylglycerol which in turn regulates the activity of protein kinase C gamma. Through protein kinase C gamma, indirectly regulates the dendritic development of Purkinje cells, cerebellar long term depression and ultimately cerebellar motor coordination. This chain is Diacylglycerol kinase gamma (DGKG), found in Homo sapiens (Human).